The sequence spans 679 residues: Methionine--tRNA ligase (679 aa).

The short motif at 14 to 24 is the 'HIGH' region element; it reads PYANGSIHLGH. Residues Cys145, Cys148, Cys158, and Cys161 each contribute to the Zn(2+) site. Positions 331 to 335 match the 'KMSKS' region motif; the sequence is KMSKS. Residue Lys334 participates in ATP binding. A tRNA-binding domain is found at 577 to 679; the sequence is TFAAVDLRVA…SGAKPGQRIK (103 aa).

This sequence belongs to the class-I aminoacyl-tRNA synthetase family. MetG type 1 subfamily. As to quaternary structure, homodimer. Zn(2+) serves as cofactor.

The protein localises to the cytoplasm. The enzyme catalyses tRNA(Met) + L-methionine + ATP = L-methionyl-tRNA(Met) + AMP + diphosphate. Its function is as follows. Is required not only for elongation of protein synthesis but also for the initiation of all mRNA translation through initiator tRNA(fMet) aminoacylation. The sequence is that of Methionine--tRNA ligase from Pseudomonas putida (strain ATCC 700007 / DSM 6899 / JCM 31910 / BCRC 17059 / LMG 24140 / F1).